We begin with the raw amino-acid sequence, 230 residues long: MAQFWAEGSLEKNNALVEYLKQYGVVRTDKVAEVMETIDRALFVPEGFTPYTDSPMPIGYNATISAPHMHATCLELLKDYLQPGMHALDVGSGSGYLTACFAMMVGPEGRAVGIEHIPELVVASTENVERSAAAALMKDGSLSFHVSDGRLGWPDAAPYDAIHVGAAAPEIPRPLLEQLKPGGRMVIPVGTYSQDLQVIDKSADGSTSVRNDASVRYVPLTSRSAQLQDS.

The active site involves Ser-65.

It belongs to the methyltransferase superfamily. L-isoaspartyl/D-aspartyl protein methyltransferase family. In terms of assembly, monomer. Highest contents in seeds.

It localises to the cytoplasm. It catalyses the reaction [protein]-L-isoaspartate + S-adenosyl-L-methionine = [protein]-L-isoaspartate alpha-methyl ester + S-adenosyl-L-homocysteine. Functionally, catalyzes the methyl esterification of L-isoaspartyl residues in peptides and proteins that result from spontaneous decomposition of normal L-aspartyl and L-asparaginyl residues. It plays a role in the repair and/or degradation of damaged proteins. This enzyme does not act on D-aspartyl residues. This chain is Protein-L-isoaspartate O-methyltransferase (PCM), found in Triticum aestivum (Wheat).